The sequence spans 204 residues: N-(5'-phosphoribosyl)anthranilate isomerase (204 aa).

The protein belongs to the TrpF family.

It carries out the reaction N-(5-phospho-beta-D-ribosyl)anthranilate = 1-(2-carboxyphenylamino)-1-deoxy-D-ribulose 5-phosphate. The protein operates within amino-acid biosynthesis; L-tryptophan biosynthesis; L-tryptophan from chorismate: step 3/5. The protein is N-(5'-phosphoribosyl)anthranilate isomerase of Bacillus cereus (strain ZK / E33L).